The following is a 143-amino-acid chain: D-aminoacyl-tRNA deacylase (143 aa).

A Gly-cisPro motif, important for rejection of L-amino acids motif is present at residues 135-136; the sequence is GP.

Belongs to the DTD family. In terms of assembly, homodimer.

Its subcellular location is the cytoplasm. The enzyme catalyses glycyl-tRNA(Ala) + H2O = tRNA(Ala) + glycine + H(+). It catalyses the reaction a D-aminoacyl-tRNA + H2O = a tRNA + a D-alpha-amino acid + H(+). In terms of biological role, an aminoacyl-tRNA editing enzyme that deacylates mischarged D-aminoacyl-tRNAs. Also deacylates mischarged glycyl-tRNA(Ala), protecting cells against glycine mischarging by AlaRS. Acts via tRNA-based rather than protein-based catalysis; rejects L-amino acids rather than detecting D-amino acids in the active site. By recycling D-aminoacyl-tRNA to D-amino acids and free tRNA molecules, this enzyme counteracts the toxicity associated with the formation of D-aminoacyl-tRNA entities in vivo and helps enforce protein L-homochirality. This chain is D-aminoacyl-tRNA deacylase, found in Mycobacterium bovis (strain ATCC BAA-935 / AF2122/97).